Here is a 274-residue protein sequence, read N- to C-terminus: Undecaprenyl-diphosphatase (274 aa).

Transmembrane regions (helical) follow at residues 1–21 (MDWF…FLPI), 48–68 (VVIQ…DFAG), 84–104 (LGVI…GDVI), 108–128 (LFRP…MWVI), 143–163 (IGLG…LWPG), 187–207 (FSFY…FIKS), 214–234 (IGLL…YLAI), and 254–274 (VIFG…NGGL).

Belongs to the UppP family.

The protein resides in the cell membrane. It catalyses the reaction di-trans,octa-cis-undecaprenyl diphosphate + H2O = di-trans,octa-cis-undecaprenyl phosphate + phosphate + H(+). Functionally, catalyzes the dephosphorylation of undecaprenyl diphosphate (UPP). Confers resistance to bacitracin. In Deinococcus geothermalis (strain DSM 11300 / CIP 105573 / AG-3a), this protein is Undecaprenyl-diphosphatase.